The sequence spans 359 residues: Small ribosomal subunit protein mS22 (359 aa).

Residues 40-65 (RPQPFEVGQPRRLLSSEAESGSSEVK) are disordered. Serine 54 carries the phosphoserine modification. Lysine 210 bears the N6-acetyllysine mark.

It belongs to the mitochondrion-specific ribosomal protein mS22 family. Component of the mitochondrial ribosome small subunit (28S) which comprises a 12S rRNA and about 30 distinct proteins.

It is found in the mitochondrion. The sequence is that of Small ribosomal subunit protein mS22 (Mrps22) from Mus musculus (Mouse).